Here is an 876-residue protein sequence, read N- to C-terminus: Probable inactive ATP-dependent zinc metalloprotease FTSHI 2, chloroplastic (876 aa).

The disordered stretch occupies residues 1–20 (MACRFPLHSSSPSQFLSPEN). A chloroplast-targeting transit peptide spans 1-32 (MACRFPLHSSSPSQFLSPENRQRLPRNYPSIS). The span at 8-19 (HSSSPSQFLSPE) shows a compositional bias: polar residues. A helical transmembrane segment spans residues 59–79 (LLAIPITLTIISASLAKPSFA). The tract at residues 256–276 (TMKAQKKQQERKKRKAVRKKK) is disordered. Over residues 258–275 (KAQKKQQERKKRKAVRKK) the composition is skewed to basic residues. A helical transmembrane segment spans residues 304–324 (VATALGLVFFYIFYRVVVLNY). Positions 350 to 370 (ELEREMEGIEEEDEEVEEGTG) are disordered. A compositionally biased stretch (acidic residues) spans 357 to 368 (GIEEEDEEVEEG). 450 to 457 (GPPGVGKT) lines the ATP pocket.

The protein in the N-terminal section; belongs to the AAA ATPase family. This sequence in the C-terminal section; belongs to the peptidase M41 family. In terms of assembly, homooligomer. Interacts with FtsHi4.

The protein resides in the plastid. Its subcellular location is the chloroplast membrane. Functionally, required for plastid development during embryogenesis. Might be involved in chaperone functions or play a structural role in the thylakoid FtsH complex. This Arabidopsis thaliana (Mouse-ear cress) protein is Probable inactive ATP-dependent zinc metalloprotease FTSHI 2, chloroplastic.